The primary structure comprises 426 residues: UPF0329 protein ECU06_0040 (426 aa).

Basic and acidic residues predominate over residues 136–172; sequence RQRKREEETERSVKELVGDEEKAKSKEEKAKSKEEKA. Residues 136-230 are disordered; that stretch reads RQRKREEETE…GGKKKSKGGR (95 aa). Residues 220 to 230 show a composition bias toward basic residues; the sequence is KGGKKKSKGGR.

Belongs to the UPF0329 family.

This Encephalitozoon cuniculi (strain GB-M1) (Microsporidian parasite) protein is UPF0329 protein ECU06_0040.